Consider the following 248-residue polypeptide: uncharacterized protein (248 aa).

The stretch at 33-57 (EWQLSEGQKRCEEINRQNRQLRVEK) forms a coiled coil.

This is an uncharacterized protein from Escherichia coli (strain K12).